Reading from the N-terminus, the 126-residue chain is Plastocyanin (126 aa).

The first 28 residues, 1-28 (MSKKFLTILAGLLLVVSSFFLSVSPAAA), serve as a signal peptide directing secretion. The region spanning 29–126 (ANATVKMGSD…AGMVGKVVVE (98 aa)) is the Plastocyanin-like domain. Positions 67, 111, 114, and 119 each coordinate Cu cation.

Belongs to the plastocyanin family. Cu(2+) serves as cofactor.

It is found in the cellular thylakoid membrane. Its function is as follows. Participates in electron transfer between P700 and the cytochrome b6-f complex in photosystem I. The sequence is that of Plastocyanin (petE) from Synechocystis sp. (strain ATCC 27184 / PCC 6803 / Kazusa).